The primary structure comprises 213 residues: Pyridoxine/pyridoxamine 5'-phosphate oxidase (213 aa).

FMN contacts are provided by residues 60–65 (RMVLMK), 75–76 (YS), Lys-82, and Gln-104. Residue Lys-65 participates in substrate binding. The substrate site is built by Tyr-122, Arg-126, and Ser-130. FMN-binding positions include 139–140 (QS) and Trp-184. Position 190-192 (190-192 (RLH)) interacts with substrate. Position 194 (Arg-194) interacts with FMN.

Belongs to the pyridoxamine 5'-phosphate oxidase family. In terms of assembly, homodimer. FMN is required as a cofactor.

It carries out the reaction pyridoxamine 5'-phosphate + O2 + H2O = pyridoxal 5'-phosphate + H2O2 + NH4(+). The catalysed reaction is pyridoxine 5'-phosphate + O2 = pyridoxal 5'-phosphate + H2O2. Its pathway is cofactor metabolism; pyridoxal 5'-phosphate salvage; pyridoxal 5'-phosphate from pyridoxamine 5'-phosphate: step 1/1. The protein operates within cofactor metabolism; pyridoxal 5'-phosphate salvage; pyridoxal 5'-phosphate from pyridoxine 5'-phosphate: step 1/1. Catalyzes the oxidation of either pyridoxine 5'-phosphate (PNP) or pyridoxamine 5'-phosphate (PMP) into pyridoxal 5'-phosphate (PLP). This chain is Pyridoxine/pyridoxamine 5'-phosphate oxidase, found in Rhodopseudomonas palustris (strain BisB18).